Reading from the N-terminus, the 1400-residue chain is DNA-directed RNA polymerase subunit beta' (1400 aa).

The Zn(2+) site is built by cysteine 71, cysteine 73, cysteine 86, and cysteine 89. The Mg(2+) site is built by aspartate 462, aspartate 464, and aspartate 466. Residues cysteine 811, cysteine 885, cysteine 892, and cysteine 895 each coordinate Zn(2+).

The protein belongs to the RNA polymerase beta' chain family. As to quaternary structure, the RNAP catalytic core consists of 2 alpha, 1 beta, 1 beta' and 1 omega subunit. When a sigma factor is associated with the core the holoenzyme is formed, which can initiate transcription. The cofactor is Mg(2+). It depends on Zn(2+) as a cofactor.

The catalysed reaction is RNA(n) + a ribonucleoside 5'-triphosphate = RNA(n+1) + diphosphate. DNA-dependent RNA polymerase catalyzes the transcription of DNA into RNA using the four ribonucleoside triphosphates as substrates. In Brucella suis (strain ATCC 23445 / NCTC 10510), this protein is DNA-directed RNA polymerase subunit beta'.